An 85-amino-acid polypeptide reads, in one-letter code: DNA-directed RNA polymerase subunit Rpo11 (85 aa).

This sequence belongs to the archaeal Rpo11/eukaryotic RPB11/RPC19 RNA polymerase subunit family. As to quaternary structure, part of the RNA polymerase complex.

The protein resides in the cytoplasm. The catalysed reaction is RNA(n) + a ribonucleoside 5'-triphosphate = RNA(n+1) + diphosphate. In terms of biological role, DNA-dependent RNA polymerase (RNAP) catalyzes the transcription of DNA into RNA using the four ribonucleoside triphosphates as substrates. The sequence is that of DNA-directed RNA polymerase subunit Rpo11 from Methanothermobacter thermautotrophicus (strain ATCC 29096 / DSM 1053 / JCM 10044 / NBRC 100330 / Delta H) (Methanobacterium thermoautotrophicum).